A 104-amino-acid polypeptide reads, in one-letter code: Ig kappa chain b5 variant C region (104 aa).

An Ig-like domain is found at 5-100; sequence PTVLIFPPSP…SGSPVVQSFS (96 aa). C26 and C85 are disulfide-bonded.

This chain is Ig kappa chain b5 variant C region, found in Oryctolagus cuniculus (Rabbit).